A 58-amino-acid chain; its full sequence is uncharacterized protein (58 aa).

The segment covering T23–T51 has biased composition (low complexity). The tract at residues T23–T58 is disordered.

This is an uncharacterized protein from Dictyostelium discoideum (Social amoeba).